We begin with the raw amino-acid sequence, 140 residues long: Large-conductance mechanosensitive channel (140 aa).

Transmembrane regions (helical) follow at residues 16–36 (VVDL…VDSI) and 86–106 (GSFL…FLMV).

It belongs to the MscL family. In terms of assembly, homopentamer.

The protein resides in the cell inner membrane. Functionally, channel that opens in response to stretch forces in the membrane lipid bilayer. May participate in the regulation of osmotic pressure changes within the cell. The polypeptide is Large-conductance mechanosensitive channel (Anaeromyxobacter sp. (strain K)).